The following is a 251-amino-acid chain: Imidazole glycerol phosphate synthase subunit HisF (251 aa).

Catalysis depends on residues Asp-11 and Asp-130.

It belongs to the HisA/HisF family. As to quaternary structure, heterodimer of HisH and HisF.

The protein resides in the cytoplasm. The enzyme catalyses 5-[(5-phospho-1-deoxy-D-ribulos-1-ylimino)methylamino]-1-(5-phospho-beta-D-ribosyl)imidazole-4-carboxamide + L-glutamine = D-erythro-1-(imidazol-4-yl)glycerol 3-phosphate + 5-amino-1-(5-phospho-beta-D-ribosyl)imidazole-4-carboxamide + L-glutamate + H(+). It participates in amino-acid biosynthesis; L-histidine biosynthesis; L-histidine from 5-phospho-alpha-D-ribose 1-diphosphate: step 5/9. In terms of biological role, IGPS catalyzes the conversion of PRFAR and glutamine to IGP, AICAR and glutamate. The HisF subunit catalyzes the cyclization activity that produces IGP and AICAR from PRFAR using the ammonia provided by the HisH subunit. The sequence is that of Imidazole glycerol phosphate synthase subunit HisF from Chlorobium phaeobacteroides (strain DSM 266 / SMG 266 / 2430).